A 100-amino-acid polypeptide reads, in one-letter code: Aspartyl/glutamyl-tRNA(Asn/Gln) amidotransferase subunit C (100 aa).

This sequence belongs to the GatC family. Heterotrimer of A, B and C subunits.

It catalyses the reaction L-glutamyl-tRNA(Gln) + L-glutamine + ATP + H2O = L-glutaminyl-tRNA(Gln) + L-glutamate + ADP + phosphate + H(+). The enzyme catalyses L-aspartyl-tRNA(Asn) + L-glutamine + ATP + H2O = L-asparaginyl-tRNA(Asn) + L-glutamate + ADP + phosphate + 2 H(+). In terms of biological role, allows the formation of correctly charged Asn-tRNA(Asn) or Gln-tRNA(Gln) through the transamidation of misacylated Asp-tRNA(Asn) or Glu-tRNA(Gln) in organisms which lack either or both of asparaginyl-tRNA or glutaminyl-tRNA synthetases. The reaction takes place in the presence of glutamine and ATP through an activated phospho-Asp-tRNA(Asn) or phospho-Glu-tRNA(Gln). In Streptococcus pneumoniae serotype 19F (strain G54), this protein is Aspartyl/glutamyl-tRNA(Asn/Gln) amidotransferase subunit C.